We begin with the raw amino-acid sequence, 503 residues long: Arabinose import ATP-binding protein AraG 1 (503 aa).

ABC transporter domains lie at 5-240 and 251-497; these read LRFD…MVGR and RALG…LPQT. An ATP-binding site is contributed by 37–44; that stretch reads GENGAGKS.

Belongs to the ABC transporter superfamily. Arabinose importer (TC 3.A.1.2.2) family. In terms of assembly, the complex is composed of two ATP-binding proteins (AraG), two transmembrane proteins (AraH) and a solute-binding protein (AraF).

It is found in the cell inner membrane. The enzyme catalyses L-arabinose(out) + ATP + H2O = L-arabinose(in) + ADP + phosphate + H(+). Functionally, part of the ABC transporter complex AraFGH involved in arabinose import. Responsible for energy coupling to the transport system. This chain is Arabinose import ATP-binding protein AraG 1, found in Burkholderia ambifaria (strain ATCC BAA-244 / DSM 16087 / CCUG 44356 / LMG 19182 / AMMD) (Burkholderia cepacia (strain AMMD)).